The sequence spans 359 residues: Acyl-CoA desaturase (359 aa).

Residues 1–72 (MPAHLLQEEI…EGPKPKLEYV (72 aa)) are Cytoplasmic-facing. Residues 73 to 93 (WRNIILMGLLHLGALYGITLI) form a helical membrane-spanning segment. Asn-75 provides a ligand contact to substrate. The Lumenal portion of the chain corresponds to 94–97 (PTCK). The chain crosses the membrane as a helical span at residues 98–118 (IYTFLWVLFYYVISALGITAG). Residues 119–217 (VHRLWSHRTY…EKLVMFQRRY (99 aa)) are Cytoplasmic-facing. The Fe cation site is built by His-120 and His-125. The short motif at 120 to 125 (HRLWSH) is the Histidine box-1 element. The substrate site is built by Asn-148, Arg-155, and Asp-156. Fe cation-binding residues include His-157, His-160, and His-161. The short motif at 157 to 161 (HRAHH) is the Histidine box-2 element. The substrate site is built by Arg-188 and Lys-189. Ser-203 carries the phosphoserine modification. The chain crosses the membrane as a helical span at residues 218 to 237 (YKPGVLLLCFILPTLVPWYL). The Lumenal segment spans residues 238–241 (WGES). A helical transmembrane segment spans residues 242–263 (FQNSLFFATFLRYAVVLNATWL). Position 262 (Trp-262) interacts with substrate. Over 264–359 (VNSAAHMYGY…RTGEESYKSG (96 aa)) the chain is Cytoplasmic. The Fe cation site is built by His-269, His-298, His-301, and His-302. Positions 298-302 (HNYHH) match the Histidine box-3 motif.

Belongs to the fatty acid desaturase type 1 family. The cofactor is Fe(2+).

It localises to the endoplasmic reticulum membrane. The enzyme catalyses octadecanoyl-CoA + 2 Fe(II)-[cytochrome b5] + O2 + 2 H(+) = (9Z)-octadecenoyl-CoA + 2 Fe(III)-[cytochrome b5] + 2 H2O. Functionally, stearoyl-CoA desaturase that utilizes O(2) and electrons from reduced cytochrome b5 to introduce the first double bond into saturated fatty acyl-CoA substrates. Catalyzes the insertion of a cis double bond at the delta-9 position into fatty acyl-CoA substrates including palmitoyl-CoA and stearoyl-CoA. Gives rise to a mixture of 16:1 and 18:1 unsaturated fatty acids. Plays an important role in lipid biosynthesis. Plays an important role in regulating the expression of genes that are involved in lipogenesis and in regulating mitochondrial fatty acid oxidation. Plays an important role in body energy homeostasis. Contributes to the biosynthesis of membrane phospholipids, cholesterol esters and triglycerides. The chain is Acyl-CoA desaturase (SCD) from Ovis aries (Sheep).